We begin with the raw amino-acid sequence, 126 residues long: UPF0102 protein DNO_0639 (126 aa).

It belongs to the UPF0102 family.

This is UPF0102 protein DNO_0639 from Dichelobacter nodosus (strain VCS1703A).